An 872-amino-acid polypeptide reads, in one-letter code: Alanine--tRNA ligase (872 aa).

Histidine 567, histidine 571, cysteine 669, and histidine 673 together coordinate Zn(2+).

It belongs to the class-II aminoacyl-tRNA synthetase family. Zn(2+) serves as cofactor.

The protein resides in the cytoplasm. The catalysed reaction is tRNA(Ala) + L-alanine + ATP = L-alanyl-tRNA(Ala) + AMP + diphosphate. In terms of biological role, catalyzes the attachment of alanine to tRNA(Ala) in a two-step reaction: alanine is first activated by ATP to form Ala-AMP and then transferred to the acceptor end of tRNA(Ala). Also edits incorrectly charged Ser-tRNA(Ala) and Gly-tRNA(Ala) via its editing domain. In Streptococcus thermophilus (strain ATCC BAA-491 / LMD-9), this protein is Alanine--tRNA ligase.